Reading from the N-terminus, the 165-residue chain is Transcription antitermination protein NusB (165 aa).

Positions 1 to 27 are disordered; it reads MISDDTDQFNPRDAKSPEAAKGKSAKR. Residues 10 to 21 show a composition bias toward basic and acidic residues; the sequence is NPRDAKSPEAAK.

This sequence belongs to the NusB family.

Involved in transcription antitermination. Required for transcription of ribosomal RNA (rRNA) genes. Binds specifically to the boxA antiterminator sequence of the ribosomal RNA (rrn) operons. This Pseudomonas savastanoi pv. phaseolicola (strain 1448A / Race 6) (Pseudomonas syringae pv. phaseolicola (strain 1448A / Race 6)) protein is Transcription antitermination protein NusB.